Here is a 283-residue protein sequence, read N- to C-terminus: uncharacterized protein (283 aa).

The active-site Proton donor is Tyr-55.

The protein belongs to the aldo/keto reductase family.

Its subcellular location is the cytoplasm. It is found in the nucleus. This is an uncharacterized protein from Schizosaccharomyces pombe (strain 972 / ATCC 24843) (Fission yeast).